A 377-amino-acid polypeptide reads, in one-letter code: Palmitoyltransferase ZDHHC16 (377 aa).

Residues 1 to 79 are Cytoplasmic-facing; it reads MRGQWSLLLG…WLVDNVIRWC (79 aa). Residues 80–100 form a helical membrane-spanning segment; sequence GVVFVVLVIVLTSSIVAIAYL. Residues 101-116 are Lumenal-facing; sequence CVLPLILQTYSVPRLC. The helical transmembrane segment at 117 to 137 threads the bilayer; sequence WHFFYSHWNLILIVFHYYQAI. Over 138-198 the chain is Cytoplasmic; it reads TTPPGYPPQG…NNCVGHYNHR (61 aa). In terms of domain architecture, DHHC spans 155-205; sequence SICKKCINPKPARTHHCSICNRCVLKMDHHCPWLNNCVGHYNHRYFFSFCF. Cys185 serves as the catalytic S-palmitoyl cysteine intermediate. Residues 199–219 form a helical membrane-spanning segment; sequence YFFSFCFFMTLGCVYCSYGSW. Residues 220-266 are Lumenal-facing; sequence DLFREAYAAIEKMKQLDKNKLQAVANQTYHQTPPPTFSFRERVTHKS. Residues 267–287 traverse the membrane as a helical segment; that stretch reads LVYLWFLCSSVALALGALTIW. The Cytoplasmic portion of the chain corresponds to 288–377; that stretch reads HAVLISRGET…TAHSASVMAV (90 aa).

This sequence belongs to the DHHC palmitoyltransferase family. In terms of assembly, interacts with ABL1. Interacts with COPS5/JAB1.

It localises to the endoplasmic reticulum membrane. The enzyme catalyses L-cysteinyl-[protein] + hexadecanoyl-CoA = S-hexadecanoyl-L-cysteinyl-[protein] + CoA. Its function is as follows. Palmitoyl acyltransferase that mediates palmitoylation of proteins such as PLN and ZDHHC6. Required during embryonic heart development and cardiac function, possibly by mediating palmitoylation of PLN, thereby affecting PLN phosphorylation and homooligomerization. Also required for eye development. Palmitoylates ZDHHC6, affecting the quaternary assembly of ZDHHC6, its localization, stability and function. May play a role in DNA damage response. May be involved in apoptosis regulation. Involved in the proliferation of neural stem cells by regulating the FGF/ERK pathway. The sequence is that of Palmitoyltransferase ZDHHC16 from Bos taurus (Bovine).